The primary structure comprises 338 residues: Ketol-acid reductoisomerase (NADP(+)) (338 aa).

In terms of domain architecture, KARI N-terminal Rossmann spans 1–181 (MKVFYDKDAD…GGGRAGIIET (181 aa)). Residues 24–27 (YGSQ), Arg-47, and Ser-52 each bind NADP(+). Residue His-107 is part of the active site. Residue Gly-133 coordinates NADP(+). In terms of domain architecture, KARI C-terminal knotted spans 182 to 327 (NFREETETDL…SKLRAMMPWI (146 aa)). Mg(2+)-binding residues include Asp-190, Glu-194, Glu-226, and Glu-230. Ser-251 lines the substrate pocket.

Belongs to the ketol-acid reductoisomerase family. Requires Mg(2+) as cofactor.

It carries out the reaction (2R)-2,3-dihydroxy-3-methylbutanoate + NADP(+) = (2S)-2-acetolactate + NADPH + H(+). The catalysed reaction is (2R,3R)-2,3-dihydroxy-3-methylpentanoate + NADP(+) = (S)-2-ethyl-2-hydroxy-3-oxobutanoate + NADPH + H(+). It participates in amino-acid biosynthesis; L-isoleucine biosynthesis; L-isoleucine from 2-oxobutanoate: step 2/4. The protein operates within amino-acid biosynthesis; L-valine biosynthesis; L-valine from pyruvate: step 2/4. Its function is as follows. Involved in the biosynthesis of branched-chain amino acids (BCAA). Catalyzes an alkyl-migration followed by a ketol-acid reduction of (S)-2-acetolactate (S2AL) to yield (R)-2,3-dihydroxy-isovalerate. In the isomerase reaction, S2AL is rearranged via a Mg-dependent methyl migration to produce 3-hydroxy-3-methyl-2-ketobutyrate (HMKB). In the reductase reaction, this 2-ketoacid undergoes a metal-dependent reduction by NADPH to yield (R)-2,3-dihydroxy-isovalerate. The sequence is that of Ketol-acid reductoisomerase (NADP(+)) from Burkholderia mallei (strain NCTC 10229).